We begin with the raw amino-acid sequence, 645 residues long: Translation factor GUF1, mitochondrial (645 aa).

Residues 44 to 228 enclose the tr-type G domain; sequence ENYRNFSIVA…AIIDRIPPPT (185 aa). GTP-binding positions include 53–60, 120–124, and 174–177; these read AHVDHGKS, DTPGH, and NKID.

The protein belongs to the TRAFAC class translation factor GTPase superfamily. Classic translation factor GTPase family. LepA subfamily.

Its subcellular location is the mitochondrion inner membrane. The catalysed reaction is GTP + H2O = GDP + phosphate + H(+). Promotes mitochondrial protein synthesis. May act as a fidelity factor of the translation reaction, by catalyzing a one-codon backward translocation of tRNAs on improperly translocated ribosomes. Binds to mitochondrial ribosomes in a GTP-dependent manner. The protein is Translation factor GUF1, mitochondrial of Saccharomyces cerevisiae (strain ATCC 204508 / S288c) (Baker's yeast).